The sequence spans 929 residues: Transcription initiation factor TFIID subunit 3 (929 aa).

Disordered stretches follow at residues 131 to 152 and 176 to 197; these read IVSSQEEEEEEQVPTDGGTSAE and LGKRPLDSPEAEELPAMKRPRL. Ser183, Ser199, Ser229, and Ser243 each carry phosphoserine. Disordered stretches follow at residues 221 to 358 and 405 to 578; these read TQKI…ETIQ and DPFE…PWKE. Low complexity predominate over residues 265–288; that stretch reads TKSFTPKTKTKTSSPGQKTKSPKT. Residue Lys266 is modified to N6-acetyllysine. Phosphoserine is present on residues Ser291, Ser297, and Ser301. Composition is skewed to polar residues over residues 340–358 and 434–466; these read PNRTPSATLSEKISKETIQ and PKASTSANNFTKSGSTPLPLSGGTSSSDNSWTM. Thr501 carries the post-translational modification Phosphothreonine. A compositionally biased stretch (basic and acidic residues) spans 504–514; it reads PLHKVYEEKTK. Positions 523–537 are enriched in basic residues; that stretch reads KKLKKELKTKMKKKE. Residues 538–578 are compositionally biased toward basic and acidic residues; sequence KQRDREREKDKNKDKSKEKDKVKEKEKDKETGRETKYPWKE. Lys581 participates in a covalent cross-link: Glycyl lysine isopeptide (Lys-Gly) (interchain with G-Cter in SUMO2). 2 stretches are compositionally biased toward basic and acidic residues: residues 603–612 and 621–648; these read KLKDGLVRKE and KDREKGKKDKDKREKEKVKDKGREDKMK. The interval 603 to 658 is disordered; the sequence is KLKDGLVRKEKEKHKDKKKDREKGKKDKDKREKEKVKDKGREDKMKAPAPPLVLPP. Ser667 bears the Phosphoserine mark. Over residues 692 to 701 the composition is skewed to basic and acidic residues; the sequence is EKEKVKEKEK. Residues 692-748 form a disordered region; the sequence is EKEKVKEKEKKKDKKEKKKKKEKEKEKKEKEREKEKREREKREKEKEKHKHEKIKVE. The segment covering 702-713 has biased composition (basic residues); that stretch reads KKDKKEKKKKKE. Residues 714 to 737 show a composition bias toward basic and acidic residues; sequence KEKEKKEKEREKEKREREKREKEK. Lys746 is covalently cross-linked (Glycyl lysine isopeptide (Lys-Gly) (interchain with G-Cter in SUMO2)). Ser755 is subject to Phosphoserine. Lys776 bears the N6-acetyllysine mark. Over residues 778-787 the composition is skewed to low complexity; the sequence is VPAPEAKPAP. The interval 778–807 is disordered; sequence VPAPEAKPAPSQNRPKTPPPAPAPAPGPML. The segment covering 793 to 804 has biased composition (pro residues); that stretch reads KTPPPAPAPAPG. The PHD-type zinc finger occupies 865–915; it reads IWICPGCNKPDDGSPMIGCDDCDDWYHWPCVGIMTAPPEEMQWFCPKCANK. Zn(2+)-binding residues include Cys868, Cys871, Cys883, Cys886, His891, Cys894, Cys909, and Cys912.

It belongs to the TAF3 family. As to quaternary structure, component of the TFIID basal transcription factor complex, composed of TATA-box-binding protein TBP, and a number of TBP-associated factors (TAFs), including TAF1, TAF2, TAF3, TAF4, TAF5, TAF6, TAF7, TAF8, TAF9, TAF10, TAF11, TAF12 and TAF13. Interacts with TAF10 via the histone fold. Interacts with TAF13, TBP, SAP130 and GCN5L2. Interacts with TBPL2.

Its subcellular location is the nucleus. Its function is as follows. The TFIID basal transcription factor complex plays a major role in the initiation of RNA polymerase II (Pol II)-dependent transcription. TFIID recognizes and binds promoters with or without a TATA box via its subunit TBP, a TATA-box-binding protein, and promotes assembly of the pre-initiation complex (PIC). The TFIID complex consists of TBP and TBP-associated factors (TAFs), including TAF1, TAF2, TAF3, TAF4, TAF5, TAF6, TAF7, TAF8, TAF9, TAF10, TAF11, TAF12 and TAF13. The TFIID complex structure can be divided into 3 modules TFIID-A, TFIID-B, and TFIID-C. TAF3 forms the TFIID-A module together with TAF5 and TBP. Required in complex with TBPL2 for the differentiation of myoblasts into myocytes. The TAF3-TBPL2 complex replaces TFIID at specific promoters at an early stage in the differentiation process. The sequence is that of Transcription initiation factor TFIID subunit 3 (TAF3) from Homo sapiens (Human).